Here is a 528-residue protein sequence, read N- to C-terminus: Potassium voltage-gated channel subfamily A member 3 (528 aa).

A disordered region spans residues 1–32; sequence MTVVPGDHLLEPEAAGGGGGDPPQGGCGSGGG. Over 1-187 the chain is Cytoplasmic; it reads MTVVPGDHLL…EYPESSGPAR (187 aa). The segment covering 15–32 has biased composition (gly residues); the sequence is AGGGGGDPPQGGCGSGGG. The chain crosses the membrane as a helical span at residues 188–206; the sequence is GIAIVSVLVILISIVIFCL. At 207-247 the chain is on the extracellular side; that stretch reads ETLPEFRDEKDYPASPSQDVFEAANNSTSGAPSGASSFSDP. Asparagine 232 carries an N-linked (GlcNAc...) asparagine glycan. Residues 248 to 269 form a helical membrane-spanning segment; the sequence is FFVVETLCIIWFSFELLVRFFA. Cysteine 270 carries the S-palmitoyl cysteine lipid modification. At 270 to 280 the chain is on the cytoplasmic side; the sequence is CPSKATFSRNI. Residues 281 to 301 traverse the membrane as a helical segment; sequence MNLIDIVAIIPYFITLGTELA. The Extracellular portion of the chain corresponds to 302–315; the sequence is ERQGNGQQAMSLAI. A helical; Voltage-sensor transmembrane segment spans residues 316-334; the sequence is LRVIRLVRVFRIFKLSRHS. Residues 335-350 lie on the Cytoplasmic side of the membrane; that stretch reads KGLQILGQTLKASMRE. A helical membrane pass occupies residues 351-370; sequence LGLLIFFLFIGVILFSSAVY. At 371-411 the chain is on the extracellular side; sequence FAEADDPSSGFNSIPDAFWWAVVTMTTVGYGDMHPVTIGGK. The short motif at 397–402 is the Selectivity filter element; the sequence is TVGYGD. Residues 412-434 form a helical membrane-spanning segment; it reads IVGSLCAIAGVLTIALPVPVIVS. Residues 435–528 lie on the Cytoplasmic side of the membrane; sequence NFNYFYHRET…VNIKKIFTDV (94 aa). The segment at 435-528 is interaction with KCNE4; it reads NFNYFYHRET…VNIKKIFTDV (94 aa). Tyrosine 452 is modified (phosphotyrosine). Residue serine 473 is modified to Phosphoserine; by PKA. The short motif at 526-528 is the PDZ-binding element; sequence TDV.

Belongs to the potassium channel family. A (Shaker) (TC 1.A.1.2) subfamily. Kv1.3/KCNA3 sub-subfamily. In terms of assembly, homotetramer. Forms heterooligomers with KCNE4 which inhibits KCNA3 activity by impairing localization to the cell membrane. The stoichiometry of KCNA3 and KCNE4 in the heterooligomers are 4:1, 4:2, 4:3 or 4:4 respectively. Increasing the number of KCNE4 subunits steadily slows the activation KCNA3 and decreases its abundance at the cell membrane. However, a single subunit of KCNE4 is sufficient for the cooperative enhancement of the inactivating function of the channel. Interacts with SEC24D; this interaction is reduced in the presence of KCNE4. Interacts with DLG1, DLG2 and DLG4 via their PDZ domains. Post-translationally, N-glycosylation promotes the cell surface expression. In terms of processing, phosphorylation on Tyr-452 inhibits its channel activity.

Its subcellular location is the cell membrane. It carries out the reaction K(+)(in) = K(+)(out). Its activity is regulated as follows. Activity is up-regulated by JAK2. Mediates the voltage-dependent potassium ion permeability of excitable membranes. Assuming opened or closed conformations in response to the voltage difference across the membrane, the protein forms a potassium-selective channel through which potassium ions may pass in accordance with their electrochemical gradient. The polypeptide is Potassium voltage-gated channel subfamily A member 3 (Kcna3) (Mus musculus (Mouse)).